The primary structure comprises 520 residues: Fusaridione A cluster transcription factor fsdR (520 aa).

The segment at 1–30 (MSTGPPSGISLVSMTTPRKSGQHTPESWSK) is disordered.

The protein localises to the nucleus. Transcription factor that regulates the expression of the gene cluster that mediates the biosynthesis of fusaridione A. This is Fusaridione A cluster transcription factor fsdR from Fusarium heterosporum.